The chain runs to 293 residues: Movement protein BC1 (293 aa).

It belongs to the begomovirus movement protein BC1 family. As to quaternary structure, binds to dimeric supercoiled plasmid DNA. Phosphorylated.

It localises to the host cell membrane. Its subcellular location is the host microsome membrane. It is found in the host endoplasmic reticulum membrane. Its function is as follows. Transports viral genome to neighboring plant cells directly through plasmosdesmata, without any budding. The movement protein allows efficient cell to cell propagation, by bypassing the host cell wall barrier. Begomovirus genome is shuttled out of nucleus by Nuclear shuttle protein (NSP) and the movement protein transports the DNA-NSP complex to cell plasmodesmata and facilitates further movement across the cell wall. This is Movement protein BC1 from Macroptilium lathyroides (Lima bean).